The chain runs to 1214 residues: Formin-D (1214 aa).

Residues 10 to 379 (KKEESPQSID…KMNNGESYLD (370 aa)) form the GBD/FH3 domain. The stretch at 401 to 448 (SGEKAVLIQKEIEDLKKQKKRDQDKLAEKDKLLTKLAKRMRKMEEAIK) forms a coiled coil. The region spanning 457–544 (NNQIEIESPP…GSGDGIPLPP (88 aa)) is the FH1 domain. Polar residues-rich tracts occupy residues 462 to 479 (IESPPDSSTSTPQETTPG) and 518 to 534 (LDTTNQQGSTDASQTEA). 6 disordered regions span residues 462 to 490 (IESPPDSSTSTPQETTPGGTKVPLKTSPV), 507 to 569 (APNG…SRPP), 868 to 948 (PKSV…PLKD), 1026 to 1045 (DKSTQRKNEKERKEMEIKKS), 1054 to 1089 (LKKIGSPSSSNRILASNESSPTSSTSSVVHQHDDED), and 1133 to 1214 (MNLQ…EGEN). Residues 541–554 (PLPPGAPPPPPPPG) show a composition bias toward pro residues. The region spanning 562 to 1037 (PQLCSRPPSI…STQRKNEKER (476 aa)) is the FH2 domain. A compositionally biased stretch (basic and acidic residues) spans 868-877 (PKSVEPKPDD). Residues 930 to 940 (QVNTNSTSDSK) show a composition bias toward polar residues. The stretch at 1019–1056 (EIEKSIKDKSTQRKNEKERKEMEIKKSKLEMIHSKLKK) forms a coiled coil. Over residues 1059–1071 (SPSSSNRILASNE) the composition is skewed to polar residues. The DAD domain occupies 1065-1095 (RILASNESSPTSSTSSVVHQHDDEDEETIKE). The span at 1161 to 1171 (SSTYSSISSIY) shows a compositional bias: low complexity. Over residues 1174 to 1214 (EPLDMSDQEDEDEEEEEDEEEEEEEEEGDDDNDNDEEEGEN) the composition is skewed to acidic residues. The stretch at 1176 to 1207 (LDMSDQEDEDEEEEEDEEEEEEEEEGDDDNDN) forms a coiled coil.

Belongs to the formin homology family. Diaphanous subfamily. Interacts (via GBD/FH3 domain) with activated Rho-GTPases.

Functionally, formins play an important role in the nucleation of actin and the formation of linear actin filaments. The protein is Formin-D (forD) of Dictyostelium discoideum (Social amoeba).